Consider the following 190-residue polypeptide: Xanthine phosphoribosyltransferase (190 aa).

Positions 20 and 27 each coordinate xanthine. A 5-phospho-alpha-D-ribose 1-diphosphate-binding site is contributed by 128–132 (ANGKA). K156 contributes to the xanthine binding site.

It belongs to the purine/pyrimidine phosphoribosyltransferase family. Xpt subfamily. Homodimer.

The protein resides in the cytoplasm. It catalyses the reaction XMP + diphosphate = xanthine + 5-phospho-alpha-D-ribose 1-diphosphate. It functions in the pathway purine metabolism; XMP biosynthesis via salvage pathway; XMP from xanthine: step 1/1. Its function is as follows. Converts the preformed base xanthine, a product of nucleic acid breakdown, to xanthosine 5'-monophosphate (XMP), so it can be reused for RNA or DNA synthesis. The sequence is that of Xanthine phosphoribosyltransferase from Pseudomonas fluorescens (strain ATCC BAA-477 / NRRL B-23932 / Pf-5).